Here is a 95-residue protein sequence, read N- to C-terminus: MAPQTSNLWLLLVVMMVMSQGCCQHWSYGLSPGGKRDLDSLSDTLGDIIERFPHADSPCSVLGCAEEPPFPKMYRMKGFIGSGTDRDNGHRTYKK.

An N-terminal signal peptide occupies residues 1–23 (MAPQTSNLWLLLVVMMVMSQGCC). Gln-24 is subject to Pyrrolidone carboxylic acid. The residue at position 33 (Gly-33) is a Glycine amide.

The protein belongs to the GnRH family.

Its subcellular location is the secreted. Functionally, stimulates the secretion of gonadotropins. The sequence is that of Progonadoliberin-1 (gnrh1) from Pagrus major (Red sea bream).